The following is a 184-amino-acid chain: Large ribosomal subunit protein uL6 (184 aa).

The protein belongs to the universal ribosomal protein uL6 family. In terms of assembly, part of the 50S ribosomal subunit.

In terms of biological role, this protein binds to the 23S rRNA, and is important in its secondary structure. It is located near the subunit interface in the base of the L7/L12 stalk, and near the tRNA binding site of the peptidyltransferase center. This is Large ribosomal subunit protein uL6 from Salinibacter ruber (strain DSM 13855 / M31).